A 170-amino-acid polypeptide reads, in one-letter code: Crossover junction endodeoxyribonuclease RuvC (170 aa).

Active-site residues include aspartate 12, glutamate 72, and aspartate 144. Residues aspartate 12, glutamate 72, and aspartate 144 each contribute to the Mg(2+) site.

Belongs to the RuvC family. As to quaternary structure, homodimer which binds Holliday junction (HJ) DNA. The HJ becomes 2-fold symmetrical on binding to RuvC with unstacked arms; it has a different conformation from HJ DNA in complex with RuvA. In the full resolvosome a probable DNA-RuvA(4)-RuvB(12)-RuvC(2) complex forms which resolves the HJ. Mg(2+) is required as a cofactor.

It localises to the cytoplasm. It catalyses the reaction Endonucleolytic cleavage at a junction such as a reciprocal single-stranded crossover between two homologous DNA duplexes (Holliday junction).. The RuvA-RuvB-RuvC complex processes Holliday junction (HJ) DNA during genetic recombination and DNA repair. Endonuclease that resolves HJ intermediates. Cleaves cruciform DNA by making single-stranded nicks across the HJ at symmetrical positions within the homologous arms, yielding a 5'-phosphate and a 3'-hydroxyl group; requires a central core of homology in the junction. The consensus cleavage sequence is 5'-(A/T)TT(C/G)-3'. Cleavage occurs on the 3'-side of the TT dinucleotide at the point of strand exchange. HJ branch migration catalyzed by RuvA-RuvB allows RuvC to scan DNA until it finds its consensus sequence, where it cleaves and resolves the cruciform DNA. The protein is Crossover junction endodeoxyribonuclease RuvC of Nitrobacter hamburgensis (strain DSM 10229 / NCIMB 13809 / X14).